The primary structure comprises 148 residues: 3-dehydroquinate dehydratase (148 aa).

Catalysis depends on Y23, which acts as the Proton acceptor. Positions 75, 81, and 88 each coordinate substrate. H101 acts as the Proton donor in catalysis. Substrate contacts are provided by residues 102 to 103 and R112; that span reads LS.

This sequence belongs to the type-II 3-dehydroquinase family. As to quaternary structure, homododecamer.

The enzyme catalyses 3-dehydroquinate = 3-dehydroshikimate + H2O. Its pathway is metabolic intermediate biosynthesis; chorismate biosynthesis; chorismate from D-erythrose 4-phosphate and phosphoenolpyruvate: step 3/7. Catalyzes a trans-dehydration via an enolate intermediate. The chain is 3-dehydroquinate dehydratase from Halorhodospira halophila (strain DSM 244 / SL1) (Ectothiorhodospira halophila (strain DSM 244 / SL1)).